A 188-amino-acid chain; its full sequence is Elongation factor P (188 aa).

The protein belongs to the elongation factor P family.

Its subcellular location is the cytoplasm. It functions in the pathway protein biosynthesis; polypeptide chain elongation. In terms of biological role, involved in peptide bond synthesis. Stimulates efficient translation and peptide-bond synthesis on native or reconstituted 70S ribosomes in vitro. Probably functions indirectly by altering the affinity of the ribosome for aminoacyl-tRNA, thus increasing their reactivity as acceptors for peptidyl transferase. The protein is Elongation factor P (efp) of Rickettsia prowazekii (strain Madrid E).